Reading from the N-terminus, the 283-residue chain is Bifunctional protein FolD (283 aa).

NADP(+) contacts are provided by residues G166 to S168 and I232.

Belongs to the tetrahydrofolate dehydrogenase/cyclohydrolase family. Homodimer.

The catalysed reaction is (6R)-5,10-methylene-5,6,7,8-tetrahydrofolate + NADP(+) = (6R)-5,10-methenyltetrahydrofolate + NADPH. It catalyses the reaction (6R)-5,10-methenyltetrahydrofolate + H2O = (6R)-10-formyltetrahydrofolate + H(+). Its pathway is one-carbon metabolism; tetrahydrofolate interconversion. Catalyzes the oxidation of 5,10-methylenetetrahydrofolate to 5,10-methenyltetrahydrofolate and then the hydrolysis of 5,10-methenyltetrahydrofolate to 10-formyltetrahydrofolate. This is Bifunctional protein FolD from Hamiltonella defensa subsp. Acyrthosiphon pisum (strain 5AT).